Consider the following 158-residue polypeptide: NAD(P)H-quinone oxidoreductase subunit J, chloroplastic (158 aa).

Belongs to the complex I 30 kDa subunit family. As to quaternary structure, NDH is composed of at least 16 different subunits, 5 of which are encoded in the nucleus.

The protein resides in the plastid. Its subcellular location is the chloroplast thylakoid membrane. It carries out the reaction a plastoquinone + NADH + (n+1) H(+)(in) = a plastoquinol + NAD(+) + n H(+)(out). It catalyses the reaction a plastoquinone + NADPH + (n+1) H(+)(in) = a plastoquinol + NADP(+) + n H(+)(out). In terms of biological role, NDH shuttles electrons from NAD(P)H:plastoquinone, via FMN and iron-sulfur (Fe-S) centers, to quinones in the photosynthetic chain and possibly in a chloroplast respiratory chain. The immediate electron acceptor for the enzyme in this species is believed to be plastoquinone. Couples the redox reaction to proton translocation, and thus conserves the redox energy in a proton gradient. The sequence is that of NAD(P)H-quinone oxidoreductase subunit J, chloroplastic from Jasminum nudiflorum (Winter jasmine).